Consider the following 930-residue polypeptide: Carnosine synthase 1 (930 aa).

Residues 1-24 (MISVDRLSEEQALGMKEQEWAGPE) are disordered. In terms of domain architecture, ATP-grasp spans 624-825 (RPPPAAFSVP…LLLAAVLLAL (202 aa)). An ATP-binding site is contributed by 650-716 (VPFPAVAKLE…MEYVPGTEHD (67 aa)). Residues Glu782, Glu794, and Asn796 each contribute to the Mg(2+) site. 3 residues coordinate Mn(2+): Glu782, Glu794, and Asn796.

In terms of assembly, homotetramer. Mg(2+) serves as cofactor. It depends on Mn(2+) as a cofactor.

It catalyses the reaction beta-alanine + L-histidine + ATP = carnosine + ADP + phosphate + H(+). The catalysed reaction is 4-aminobutanoate + L-histidine + ATP = L-homocarnosine + ADP + phosphate + H(+). Functionally, catalyzes the synthesis of carnosine and homocarnosine. Carnosine is synthesized more efficiently than homocarnosine. The chain is Carnosine synthase 1 from Gallus gallus (Chicken).